Here is a 22-residue protein sequence, read N- to C-terminus: Fuctinin-1 (22 aa).

The tract at residues 1-22 (SASPGLPKGEKEQQEAIEHIDE) is disordered. The segment covering 8 to 22 (KGEKEQQEAIEHIDE) has biased composition (basic and acidic residues).

It to human SET/PHAPII protein. Oligomer.

Its subcellular location is the cytoplasm. In terms of biological role, has a role in the physiological regulation of fucosylation processes. The sequence is that of Fuctinin-1 from Rattus norvegicus (Rat).